Here is a 103-residue protein sequence, read N- to C-terminus: Large ribosomal subunit protein bL21 (103 aa).

It belongs to the bacterial ribosomal protein bL21 family. As to quaternary structure, part of the 50S ribosomal subunit. Contacts protein L20.

This protein binds to 23S rRNA in the presence of protein L20. This chain is Large ribosomal subunit protein bL21, found in Haemophilus influenzae (strain PittEE).